Reading from the N-terminus, the 536-residue chain is Chaperonin GroEL (536 aa).

ATP is bound by residues 29 to 32, 86 to 90, Gly-413, and Asp-494; these read TLGP and DGTTT.

The protein belongs to the chaperonin (HSP60) family. In terms of assembly, forms a cylinder of 14 subunits composed of two heptameric rings stacked back-to-back. Interacts with the co-chaperonin GroES.

It localises to the cytoplasm. The enzyme catalyses ATP + H2O + a folded polypeptide = ADP + phosphate + an unfolded polypeptide.. In terms of biological role, together with its co-chaperonin GroES, plays an essential role in assisting protein folding. The GroEL-GroES system forms a nano-cage that allows encapsulation of the non-native substrate proteins and provides a physical environment optimized to promote and accelerate protein folding. The polypeptide is Chaperonin GroEL (Acholeplasma laidlawii (strain PG-8A)).